The following is a 28-amino-acid chain: Mu-theraphotoxin-Hsp1a (28 aa).

Cystine bridges form between cysteine 2–cysteine 16, cysteine 9–cysteine 21, and cysteine 15–cysteine 25. An Asparagine amide modification is found at asparagine 28.

Belongs to the neurotoxin 30 (phrixotoxin) family. In terms of tissue distribution, expressed by the venom gland.

Its subcellular location is the secreted. In terms of biological role, potent and selective inhibitor of Nav1.7/SCN9A sodium channels. Inhibits Nav1.7/SCN9A peak current (IC(50)=13 nM). In vivo, does not induce visible signs of toxicity when intravenously injected into mice. This Homoeomma sp. (Peruvian tarantula) protein is Mu-theraphotoxin-Hsp1a.